The chain runs to 353 residues: MSSPLSLQTLVKKTVASTSCLSIDEHILKYCGLWWHDAPLKLYIDRGRIYIKSGFLGEDIDLCVALIIAVKENNYSLIKLFTEWGAYINYSLLSINTKHARDLCRQLGAKETLDDYDIFCIFNKIMHNKTSGSIILCHEIFINNPKLENNFAAQLRRLIYKRLCGLIEIKETDELSELLVKYWYANAVQYDHKDAICFLDEKYTDLDEWRLKCYLCYNKIYELHDIYHKKKIQIDVNEMLSLACIRDNNLLTIYYCYALGGNINQAMLTSVQYYNIGNIYFCIDLGGNAFEEGSAIARQNGYNFLCHSLILNIYSSDASLPLNLKVPEEISSLLKNYKSKNLSIILDYSHKIL.

It belongs to the asfivirus MGF 360 family.

Plays a role in virus cell tropism, and may be required for efficient virus replication in macrophages. The protein is Protein MGF 360-13L of African swine fever virus (isolate Pig/Kenya/KEN-50/1950) (ASFV).